We begin with the raw amino-acid sequence, 468 residues long: Chromosomal replication initiator protein DnaA (468 aa).

Residues 1–90 (MTQEKWGLLC…NSPMRPARAA (90 aa)) form a domain I, interacts with DnaA modulators region. The interval 91–126 (RPAAAAAAAAAAVEAPQVSAPRATDTSDVLDGLQAA) is domain II. The domain III, AAA+ region stretch occupies residues 127-348 (PLDPRFTFDS…GALTRLFAFA (222 aa)). ATP is bound by residues Gly-171, Gly-173, Lys-174, and Thr-175. Residues 349–468 (SLVGREIDME…VEMLRRALEA (120 aa)) are domain IV, binds dsDNA.

It belongs to the DnaA family. As to quaternary structure, oligomerizes as a right-handed, spiral filament on DNA at oriC.

The protein localises to the cytoplasm. Plays an essential role in the initiation and regulation of chromosomal replication. ATP-DnaA binds to the origin of replication (oriC) to initiate formation of the DNA replication initiation complex once per cell cycle. Binds the DnaA box (a 9 base pair repeat at the origin) and separates the double-stranded (ds)DNA. Forms a right-handed helical filament on oriC DNA; dsDNA binds to the exterior of the filament while single-stranded (ss)DNA is stabiized in the filament's interior. The ATP-DnaA-oriC complex binds and stabilizes one strand of the AT-rich DNA unwinding element (DUE), permitting loading of DNA polymerase. After initiation quickly degrades to an ADP-DnaA complex that is not apt for DNA replication. Binds acidic phospholipids. In Ruegeria pomeroyi (strain ATCC 700808 / DSM 15171 / DSS-3) (Silicibacter pomeroyi), this protein is Chromosomal replication initiator protein DnaA.